A 126-amino-acid polypeptide reads, in one-letter code: Large ribosomal subunit protein uL22 (126 aa).

It belongs to the universal ribosomal protein uL22 family. Part of the 50S ribosomal subunit.

In terms of biological role, this protein binds specifically to 23S rRNA; its binding is stimulated by other ribosomal proteins, e.g. L4, L17, and L20. It is important during the early stages of 50S assembly. It makes multiple contacts with different domains of the 23S rRNA in the assembled 50S subunit and ribosome. Its function is as follows. The globular domain of the protein is located near the polypeptide exit tunnel on the outside of the subunit, while an extended beta-hairpin is found that lines the wall of the exit tunnel in the center of the 70S ribosome. The chain is Large ribosomal subunit protein uL22 from Ruegeria sp. (strain TM1040) (Silicibacter sp.).